The sequence spans 788 residues: Multi-functional prenyltransferase ltmE (788 aa).

Substrate contacts are provided by Lys-18 and His-51. Asp-58 is a binding site for Mg(2+). The substrate site is built by Arg-67, Lys-151, Thr-152, Gln-182, Asn-189, and Lys-199. A disordered region spans residues 283 to 337 (DTLDGDDLTRPSTITQHEQDDHVDRAAIDAKSDASGSSNKSLTPPETAPTTDTLS). The span at 299 to 314 (HEQDDHVDRAAIDAKS) shows a compositional bias: basic and acidic residues. Residues 316 to 337 (ASGSSNKSLTPPETAPTTDTLS) show a composition bias toward polar residues. 404-405 (MA) lines the L-tryptophan pocket. Substrate-binding residues include Arg-427, Arg-599, Lys-601, Tyr-603, and Tyr-687.

In the N-terminal section; belongs to the FPP/GGPP synthase family. This sequence in the C-terminal section; belongs to the tryptophan dimethylallyltransferase family. It depends on Mg(2+) as a cofactor.

It participates in secondary metabolite biosynthesis. In terms of biological role, multi-functional prenyltransferase; part of the gene cluster that mediates the biosynthesis of lolitrems, indole-diterpene mycotoxins that are potent tremorgens in mammals, and are synthesized by clavicipitaceous fungal endophytes in association with their grass hosts. The geranylgeranyl diphosphate (GGPP) synthase ltmG is proposed to catalyze the first step in lolitrem biosynthesis. LtmG catalyzes a series of iterative condensations of isopentenyl diphosphate (IPP) with dimethylallyl diphosphate (DMAPP), geranyl diphosphate (GPP), and farnesyl diphosphate (FPP), to form GGPP. GGPP then condenses with indole-3-glycerol phosphate to form 3-geranylgeranylindole, an acyclic intermediate, to be incorporated into paxilline. Either ltmG or ltmC could be responsible for this step, as both are putative prenyl transferases. The FAD-dependent monooxygenase ltmM then catalyzes the epoxidation of the two terminal alkenes of the geranylgeranyl moiety, which is subsequently cyclized by ltmB, to paspaline. The cytochrome P450 monooxygenases ltmQ and ltmP can sequentially oxidize paspaline to terpendole E and terpendole F. Alternatively, ltmP converts paspaline to an intermediate which is oxidized by ltmQ to terpendole F. LtmF, ltmK, ltmE and ltmJ appear to be unique to the epichloe endophytes. The prenyltransferase ltmF is involved in the 27-hydroxyl-O-prenylation. The cytochrome P450 monooxygenase ltmK is required for the oxidative acetal ring formation. The multi-functional prenyltransferase ltmE is required for C20- and C21-prenylations of the indole ring of paspalanes and acts together with the cytochrome P450 monooxygenase ltmJ to yield lolitremanes by multiple oxidations and ring closures. The stereoisomer pairs of lolitriol and lolitrem N or lolitrem B and lolitrem F may be attributed to variations in the way in which ring closure can occur under the action of ltmJ. While the major product of this pathway is lolitrem B, the prenyl transferases and cytochrome P450 monooxygenases identified in this pathway have a remarkable versatility in their regio- and stereo-specificities to generate a diverse range of metabolites that are products of a metabolic grid rather than a linear pathway. The chain is Multi-functional prenyltransferase ltmE from Epichloe festucae var. lolii (Neotyphodium lolii).